A 675-amino-acid polypeptide reads, in one-letter code: Protein PALS1 (675 aa).

Disordered stretches follow at residues 1 to 34 (MTTS…KHRE) and 51 to 78 (RRSA…KKQE). Residues 1 to 345 (MTTSHMNGHV…QQIKPPPAKE (345 aa)) are required for the correct localization of PALS1 and PATJ at cell-cell contacts and the normal formation of tight junctions and adherens junctions. 2 stretches are compositionally biased toward basic and acidic residues: residues 10 to 34 (VTEE…KHRE) and 54 to 78 (AQLE…KKQE). Phosphoserine occurs at positions 14 and 25. Residues 21–140 (VDLASPEEHQ…LKHIQHTLID (120 aa)) form an interaction with PARD6B region. Residues Ser83 and Ser84 each carry the phosphoserine modification. L27 domains are found at residues 120–177 (KILE…NKAS) and 179–235 (PFPL…MQLE). Residues 181 to 243 (PLISNAQDLA…LEPITDERVY (63 aa)) form an interaction with LIN7C region. The 81-residue stretch at 256-336 (IVRIEKARDI…TLTFVLIPSQ (81 aa)) folds into the PDZ domain. The SH3 domain occupies 345 to 417 (ETVIHVKAHF…PGKSFQQQRE (73 aa)). The region spanning 479–660 (KRPIILIGPQ…AYQELLRLIN (182 aa)) is the Guanylate kinase-like domain. 486 to 493 (GPQNCGQN) is a binding site for ATP.

It belongs to the MAGUK family. Heterodimer with MPP1. Forms a heterotrimeric complex composed of PALS1, LIN7B and PATJ; the N-terminal L27 domain of PALS1 interacts with the L27 domain of PATJ and the C-terminal L27 domain of PALS1 interacts with the L27 domain of LIN7B. Component of a complex composed of PALS1, CRB1 and MPP4. Component of a complex whose core is composed of ARHGAP17, AMOT, PALS1, PATJ and PARD3/PAR3. Component of a complex composed of PALS1, CRB1 and EPB41L5. Within the complex, interacts (via HOOK domain) with EPB41L5 (via FERM domain), and interacts with CRB1 (via intracellular domain). Component of a complex composed of PALS1, MPP3 and CRB1; PALS1 acts as a bridging protein between MPP3 (via guanylate kinase-like domain) and CRB1. Component of a complex composed of CRB3, PALS1 and PATJ. As part of the Crumbs complex; interacts with WWP1, the interaction is enhanced by AMOTL2 and facilitates WWP1 localization to the plasma membrane. The Crumbs complex promotes monoubiquitination of AMOTL2 by WWP1, which activates the Hippo signaling pathway. Interacts (via PDZ domain) with PATJ (via N-terminus). Interacts with EZR. Interacts (via PDZ domain) with CRB1 (via C-terminal ERLI motif). While the PDZ domain is sufficient for interaction with CRB1, the adjacent SH3 and guanylate kinase-like domains are likely to contribute to a high affinity interaction. Interacts with WWTR1/TAZ (via WW domain). Interacts with MPP7. Interacts (via PDZ domain) with CRB3 (via C-terminus). Interacts with LIN7C. Interacts with MPDZ. Interacts with PARD6B. Interacts with SC6A1. Interacts with CDH5; the interaction promotes PALS1 localization to cell junctions and is required for CDH5-mediated vascular lumen formation and endothelial cell. Interacts with NPHP1 (via coiled coil and SH3 domains). Interacts with NPHP4. Interacts with CRB2.

It localises to the golgi apparatus. It is found in the cell membrane. Its subcellular location is the endomembrane system. The protein localises to the cell junction. The protein resides in the tight junction. It localises to the adherens junction. It is found in the cell projection. Its subcellular location is the axon. The protein localises to the perikaryon. The protein resides in the apical cell membrane. Plays a role in tight junction biogenesis and in the establishment of cell polarity in epithelial cells. Also involved in adherens junction biogenesis by ensuring correct localization of the exocyst complex protein EXOC4/SEC8 which allows trafficking of adherens junction structural component CDH1 to the cell surface. Plays a role through its interaction with CDH5 in vascular lumen formation and endothelial membrane polarity. Required during embryonic and postnatal retinal development. Required for the maintenance of cerebellar progenitor cells in an undifferentiated proliferative state, preventing premature differentiation, and is required for cerebellar histogenesis, fissure formation, cerebellar layer organization and cortical development. Plays a role in neuronal progenitor cell survival, potentially via promotion of mTOR signaling. Plays a role in the radial and longitudinal extension of the myelin sheath in Schwann cells. May modulate SC6A1/GAT1-mediated GABA uptake by stabilizing the transporter. May play a role in the T-cell receptor-mediated activation of NF-kappa-B. Required for localization of EZR to the apical membrane of parietal cells and may play a role in the dynamic remodeling of the apical cytoskeleton. Required for the normal polarized localization of the vesicular marker STX4. Required for the correct trafficking of the myelin proteins PMP22 and MAG. Involved in promoting phosphorylation and cytoplasmic retention of transcriptional coactivators YAP1 and WWTR1/TAZ which leads to suppression of TGFB1-dependent transcription of target genes such as CCN2/CTGF, SERPINE1/PAI1, SNAI1/SNAIL1 and SMAD7. In Pongo abelii (Sumatran orangutan), this protein is Protein PALS1.